A 272-amino-acid chain; its full sequence is Nitrogenase iron protein (272 aa).

8-15 (GKGGIGKS) lines the ATP pocket. C94 is a [4Fe-4S] cluster binding site. At R97 the chain carries ADP-ribosylarginine; by dinitrogenase reductase ADP-ribosyltransferase. C129 serves as a coordination point for [4Fe-4S] cluster.

Belongs to the NifH/BchL/ChlL family. As to quaternary structure, homodimer. [4Fe-4S] cluster is required as a cofactor. The reversible ADP-ribosylation of Arg-97 inactivates the nitrogenase reductase and regulates nitrogenase activity.

The enzyme catalyses N2 + 8 reduced [2Fe-2S]-[ferredoxin] + 16 ATP + 16 H2O = H2 + 8 oxidized [2Fe-2S]-[ferredoxin] + 2 NH4(+) + 16 ADP + 16 phosphate + 6 H(+). Functionally, the key enzymatic reactions in nitrogen fixation are catalyzed by the nitrogenase complex, which has 2 components: the iron protein and the molybdenum-iron protein. The sequence is that of Nitrogenase iron protein from Clostridium acetobutylicum (strain ATCC 824 / DSM 792 / JCM 1419 / IAM 19013 / LMG 5710 / NBRC 13948 / NRRL B-527 / VKM B-1787 / 2291 / W).